We begin with the raw amino-acid sequence, 770 residues long: Potassium transporter 25 (770 aa).

The Cytoplasmic portion of the chain corresponds to 1–23 (MDLEAAHGAAAAPGKRRRRARES). The helical transmembrane segment at 24–44 (WGASLLLAYQSLGVVYGDVAT) threads the bilayer. The Extracellular segment spans residues 45–70 (SPLYVYKSAFAGDDIQHSAGNEEIYG). The helical transmembrane segment at 71–91 (VLSFVFWTLTLISLVKYVLIV) threads the bilayer. At 92-152 (LRADDGGEGG…MLERYRVLQR (61 aa)) the chain is on the cytoplasmic side. Residues 153 to 173 (LLLLFALLGTCMVIGDGVLTP) traverse the membrane as a helical segment. The Extracellular segment spans residues 174–194 (AVSVYSAVSGLELSMEHEHHK). Residues 195-215 (YVQLPVTCAILIGLFALQHYG) form a helical membrane-spanning segment. The Cytoplasmic segment spans residues 216–218 (THR). A helical transmembrane segment spans residues 219–239 (VGFIFAPIVCVWLLCISAIGV). Topologically, residues 240–267 (YNIVHWNHHVYRALSPYYMYQFLKKTQT) are extracellular. Residues 268–288 (GGWMSLGGILLCVTGSEAMYA) traverse the membrane as a helical segment. The Cytoplasmic portion of the chain corresponds to 289 to 299 (DLGHFSQSSIK). Residues 300-320 (IAFMSVVYPALVLAYMGQAAY) traverse the membrane as a helical segment. The Extracellular segment spans residues 321–346 (ISQHHSFENAYHIGFYVSVPEKLRWP). A helical membrane pass occupies residues 347 to 367 (VLVIAILAAVVGSQAVITGTF). Over 368 to 394 (SIIKQCSSLSCFPGVKIVHTSSTVHGQ) the chain is Cytoplasmic. Residues 395 to 415 (IYIPEINWILMILCLAVTLGF) form a helical membrane-spanning segment. The Extracellular segment spans residues 416–425 (RNTKHLANAQ). The helical transmembrane segment at 426-446 (GLAVITVMLVTTCLMSLVIVL) threads the bilayer. Residues 447-451 (CWNKS) are Cytoplasmic-facing. A helical transmembrane segment spans residues 452–472 (IFLALGFLIFFGTIEVLYFSA). Over 473–479 (SLVKFHE) the chain is Extracellular. A helical transmembrane segment spans residues 480–500 (GAWVPITLSFIFMIVMCVWHY). The Cytoplasmic segment spans residues 501–770 (GTIKKYEFDF…TLEVGMVYQV (270 aa)).

Belongs to the HAK/KUP transporter (TC 2.A.72.3) family.

The protein resides in the membrane. In terms of biological role, high-affinity potassium transporter. This chain is Potassium transporter 25 (HAK25), found in Oryza sativa subsp. japonica (Rice).